Reading from the N-terminus, the 231-residue chain is Ribonuclease P protein component 3 (231 aa).

This sequence belongs to the eukaryotic/archaeal RNase P protein component 3 family. Consists of a catalytic RNA component and at least 4-5 protein subunits.

Its subcellular location is the cytoplasm. The enzyme catalyses Endonucleolytic cleavage of RNA, removing 5'-extranucleotides from tRNA precursor.. Its function is as follows. Part of ribonuclease P, a protein complex that generates mature tRNA molecules by cleaving their 5'-ends. This chain is Ribonuclease P protein component 3, found in Methanococcus maripaludis (strain C5 / ATCC BAA-1333).